A 445-amino-acid chain; its full sequence is Exodeoxyribonuclease 7 large subunit (445 aa).

It belongs to the XseA family. As to quaternary structure, heterooligomer composed of large and small subunits.

The protein resides in the cytoplasm. It carries out the reaction Exonucleolytic cleavage in either 5'- to 3'- or 3'- to 5'-direction to yield nucleoside 5'-phosphates.. Functionally, bidirectionally degrades single-stranded DNA into large acid-insoluble oligonucleotides, which are then degraded further into small acid-soluble oligonucleotides. The sequence is that of Exodeoxyribonuclease 7 large subunit from Staphylococcus aureus (strain USA300 / TCH1516).